Here is a 201-residue protein sequence, read N- to C-terminus: FMN-dependent NADH:quinone oxidoreductase (201 aa).

Residues Ser-10, 16–18 (SQS), and 96–99 (MYNF) each bind FMN.

It belongs to the azoreductase type 1 family. As to quaternary structure, homodimer. The cofactor is FMN.

The enzyme catalyses 2 a quinone + NADH + H(+) = 2 a 1,4-benzosemiquinone + NAD(+). The catalysed reaction is N,N-dimethyl-1,4-phenylenediamine + anthranilate + 2 NAD(+) = 2-(4-dimethylaminophenyl)diazenylbenzoate + 2 NADH + 2 H(+). Its function is as follows. Quinone reductase that provides resistance to thiol-specific stress caused by electrophilic quinones. Functionally, also exhibits azoreductase activity. Catalyzes the reductive cleavage of the azo bond in aromatic azo compounds to the corresponding amines. The polypeptide is FMN-dependent NADH:quinone oxidoreductase (Sodalis glossinidius (strain morsitans)).